A 675-amino-acid polypeptide reads, in one-letter code: Probable potassium transport system protein Kup (675 aa).

A compositionally biased stretch (basic and acidic residues) spans 1-12; sequence MEPAMPEHDGDH. Residues 1–25 are disordered; it reads MEPAMPEHDGDHASNPPHGVGIPND. 12 helical membrane-spanning segments follow: residues 62–82, 104–124, 153–173, 195–215, 222–242, 255–275, 300–320, 332–352, 390–410, 419–439, 450–470, and 472–492; these read ALLA…LYAL, LASL…VILI, WLFG…SIIT, IIIP…VLGT, FGPI…KGIF, FALE…GSVV, WLFF…ALLI, LLVP…ATVI, IYLP…VLAF, AYGI…MVVF, VAIV…ANVL, and IPDG…IMTT.

It belongs to the HAK/KUP transporter (TC 2.A.72) family.

It localises to the cell inner membrane. It carries out the reaction K(+)(in) + H(+)(in) = K(+)(out) + H(+)(out). Functionally, transport of potassium into the cell. Likely operates as a K(+):H(+) symporter. The polypeptide is Probable potassium transport system protein Kup (Gluconobacter oxydans (strain 621H) (Gluconobacter suboxydans)).